Reading from the N-terminus, the 166-residue chain is ATP synthase subunit b (166 aa).

Residues 10 to 30 (LLFWMVIVFGIVFVILAKYGF) traverse the membrane as a helical segment.

Belongs to the ATPase B chain family. F-type ATPases have 2 components, F(1) - the catalytic core - and F(0) - the membrane proton channel. F(1) has five subunits: alpha(3), beta(3), gamma(1), delta(1), epsilon(1). F(0) has three main subunits: a(1), b(2) and c(10-14). The alpha and beta chains form an alternating ring which encloses part of the gamma chain. F(1) is attached to F(0) by a central stalk formed by the gamma and epsilon chains, while a peripheral stalk is formed by the delta and b chains.

The protein resides in the cell inner membrane. F(1)F(0) ATP synthase produces ATP from ADP in the presence of a proton or sodium gradient. F-type ATPases consist of two structural domains, F(1) containing the extramembraneous catalytic core and F(0) containing the membrane proton channel, linked together by a central stalk and a peripheral stalk. During catalysis, ATP synthesis in the catalytic domain of F(1) is coupled via a rotary mechanism of the central stalk subunits to proton translocation. Functionally, component of the F(0) channel, it forms part of the peripheral stalk, linking F(1) to F(0). In Phocaeicola vulgatus (strain ATCC 8482 / DSM 1447 / JCM 5826 / CCUG 4940 / NBRC 14291 / NCTC 11154) (Bacteroides vulgatus), this protein is ATP synthase subunit b.